The chain runs to 545 residues: Carboxypeptidase N subunit 2 (545 aa).

A signal peptide spans 1 to 21; that stretch reads MLPGAWLLWTSLLLLARPAQP. An LRRNT domain is found at 22–49; the sequence is CPMGCDCFVQEVFCSDEELATVPLDIPP. 3 N-linked (GlcNAc...) asparagine glycosylation sites follow: N74, N111, and N119. 12 LRR repeats span residues 98 to 119, 122 to 143, 146 to 167, 170 to 191, 194 to 215, 218 to 239, 242 to 263, 266 to 287, 290 to 311, 314 to 335, 338 to 359, and 362 to 383; these read RLEDLEVTGSSFLNLSTNIFSN, SLGKLTLNFNMLEALPEGLFQH, ALESLHLQGNQLQALPRRLFQP, HLKTLNLAQNLLAQLPEELFHP, SLQTLKLSNNALSGLPQGVFGK, SLQELFLDSNNISELPPQVFSQ, CLERLWLQRNAITHLPLSIFAS, NLTFLSLQWNMLRVLPAGLFAH, CLVGLSLTHNQLETVAEGTFAH, NLRSLMLSYNAITHLPAGIFRD, ELVKLYLGSNNLTALHPALFQN, and KLELLSLSKNQLTTLPEGIFDT. N228 carries an N-linked (GlcNAc...) asparagine glycan. N266 carries N-linked (GlcNAc...) asparagine glycosylation. Residues N348 and N359 are each glycosylated (N-linked (GlcNAc...) asparagine). An LRRCT domain is found at 395 to 447; that stretch reads NPWQCDCHLAYLFNWLQQYTDRLLNIQTYCAGPAYLKGQVVPALNEKQLVCPV. N518 is a glycosylation site (N-linked (GlcNAc...) asparagine).

As to quaternary structure, tetramer of two catalytic chains and two glycosylated inactive chains. Post-translationally, whether or not any Cys residues participate in intrachain bonds is unknown, but they do not form interchain disulfide bonds with the 50 kDa catalytic subunit.

It is found in the secreted. In terms of biological role, the 83 kDa subunit binds and stabilizes the catalytic subunit at 37 degrees Celsius and keeps it in circulation. Under some circumstances it may be an allosteric modifier of the catalytic subunit. The sequence is that of Carboxypeptidase N subunit 2 (CPN2) from Homo sapiens (Human).